Reading from the N-terminus, the 774-residue chain is Ion-translocating oxidoreductase complex subunit C (774 aa).

4Fe-4S ferredoxin-type domains follow at residues 359–389 (ELPEPVPAMPCIRCGDCAQVCPVSLLPQQLH) and 399–428 (QLLAHNLFDCIECGACAYVCPSSIPLVQYY). Positions 369, 372, 375, 379, 408, 411, 414, and 418 each coordinate [4Fe-4S] cluster. Positions 453-490 (EQRQARLRRDEERRAAERAQRAEKAALARAAQAEREEA) are enriched in basic and acidic residues. The disordered stretch occupies residues 453–493 (EQRQARLRRDEERRAAERAQRAEKAALARAAQAEREEAAPA).

This sequence belongs to the 4Fe4S bacterial-type ferredoxin family. RnfC subfamily. The complex is composed of six subunits: RnfA, RnfB, RnfC, RnfD, RnfE and RnfG. The cofactor is [4Fe-4S] cluster.

It is found in the cell inner membrane. Its function is as follows. Part of a membrane-bound complex that couples electron transfer with translocation of ions across the membrane. In Pseudomonas aeruginosa (strain ATCC 15692 / DSM 22644 / CIP 104116 / JCM 14847 / LMG 12228 / 1C / PRS 101 / PAO1), this protein is Ion-translocating oxidoreductase complex subunit C.